The primary structure comprises 329 residues: Lipoyl synthase (329 aa).

The interval 1–23 (MTDLTATPAPAEPAASAYDPTAK) is disordered. [4Fe-4S] cluster contacts are provided by Cys-76, Cys-81, Cys-87, Cys-102, Cys-106, Cys-109, and Ser-316. A Radical SAM core domain is found at 87-305 (CFGKGTATFM…EEEAYKMGFT (219 aa)).

This sequence belongs to the radical SAM superfamily. Lipoyl synthase family. Requires [4Fe-4S] cluster as cofactor.

The protein localises to the cytoplasm. It catalyses the reaction [[Fe-S] cluster scaffold protein carrying a second [4Fe-4S](2+) cluster] + N(6)-octanoyl-L-lysyl-[protein] + 2 oxidized [2Fe-2S]-[ferredoxin] + 2 S-adenosyl-L-methionine + 4 H(+) = [[Fe-S] cluster scaffold protein] + N(6)-[(R)-dihydrolipoyl]-L-lysyl-[protein] + 4 Fe(3+) + 2 hydrogen sulfide + 2 5'-deoxyadenosine + 2 L-methionine + 2 reduced [2Fe-2S]-[ferredoxin]. Its pathway is protein modification; protein lipoylation via endogenous pathway; protein N(6)-(lipoyl)lysine from octanoyl-[acyl-carrier-protein]: step 2/2. Catalyzes the radical-mediated insertion of two sulfur atoms into the C-6 and C-8 positions of the octanoyl moiety bound to the lipoyl domains of lipoate-dependent enzymes, thereby converting the octanoylated domains into lipoylated derivatives. This Burkholderia pseudomallei (strain 1106a) protein is Lipoyl synthase.